Consider the following 171-residue polypeptide: UPF0303 protein YPTS_2661 (171 aa).

The protein belongs to the UPF0303 family.

In Yersinia pseudotuberculosis serotype IB (strain PB1/+), this protein is UPF0303 protein YPTS_2661.